A 429-amino-acid polypeptide reads, in one-letter code: 3-phosphoshikimate 1-carboxyvinyltransferase (429 aa).

Positions 20, 21, and 25 each coordinate 3-phosphoshikimate. Lysine 20 is a binding site for phosphoenolpyruvate. Glycine 89 and arginine 118 together coordinate phosphoenolpyruvate. 3-phosphoshikimate is bound by residues serine 164, serine 165, glutamine 166, serine 192, aspartate 311, and lysine 338. Glutamine 166 lines the phosphoenolpyruvate pocket. Aspartate 311 acts as the Proton acceptor in catalysis. Positions 342 and 384 each coordinate phosphoenolpyruvate.

It belongs to the EPSP synthase family. In terms of assembly, monomer.

The protein localises to the cytoplasm. The enzyme catalyses 3-phosphoshikimate + phosphoenolpyruvate = 5-O-(1-carboxyvinyl)-3-phosphoshikimate + phosphate. The protein operates within metabolic intermediate biosynthesis; chorismate biosynthesis. In terms of biological role, catalyzes the transfer of the enolpyruvyl moiety of phosphoenolpyruvate (PEP) to the 5-hydroxyl of shikimate-3-phosphate (S3P) to produce enolpyruvyl shikimate-3-phosphate and inorganic phosphate. The protein is 3-phosphoshikimate 1-carboxyvinyltransferase of Methanococcus vannielii (strain ATCC 35089 / DSM 1224 / JCM 13029 / OCM 148 / SB).